Consider the following 459-residue polypeptide: UDP-N-acetylmuramoyl-tripeptide--D-alanyl-D-alanine ligase (459 aa).

121 to 127 (GSSGKTT) provides a ligand contact to ATP.

This sequence belongs to the MurCDEF family. MurF subfamily.

The protein resides in the cytoplasm. The catalysed reaction is D-alanyl-D-alanine + UDP-N-acetyl-alpha-D-muramoyl-L-alanyl-gamma-D-glutamyl-meso-2,6-diaminopimelate + ATP = UDP-N-acetyl-alpha-D-muramoyl-L-alanyl-gamma-D-glutamyl-meso-2,6-diaminopimeloyl-D-alanyl-D-alanine + ADP + phosphate + H(+). Its pathway is cell wall biogenesis; peptidoglycan biosynthesis. Functionally, involved in cell wall formation. Catalyzes the final step in the synthesis of UDP-N-acetylmuramoyl-pentapeptide, the precursor of murein. In Treponema pallidum (strain Nichols), this protein is UDP-N-acetylmuramoyl-tripeptide--D-alanyl-D-alanine ligase.